A 99-amino-acid chain; its full sequence is RNA-binding protein Hfq (99 aa).

The region spanning 9-68 (DPFLNALRRERVPVSIYLVNGIKLQGQIESFDQFVILLKNTVSQMVYKHAISTVVPSRPV) is the Sm domain. Residues 64-99 (PSRPVSHHSNNPGGGSNYHGNNTAASQQSQEADDAE) are disordered.

The protein belongs to the Hfq family. As to quaternary structure, homohexamer.

Its function is as follows. RNA chaperone that binds small regulatory RNA (sRNAs) and mRNAs to facilitate mRNA translational regulation in response to envelope stress, environmental stress and changes in metabolite concentrations. Also binds with high specificity to tRNAs. The sequence is that of RNA-binding protein Hfq from Pectobacterium carotovorum subsp. carotovorum (strain PC1).